A 336-amino-acid polypeptide reads, in one-letter code: Large ribosomal subunit protein uL1 (336 aa).

The tract at residues Met1–Ile245 is large ribosomal subunit protein uL1. Positions Ala246–Lys336 are unknown. The interval Ala267–Lys336 is disordered. Positions Lys286–Val305 are enriched in basic residues. A compositionally biased stretch (low complexity) spans Ala306–Lys315.

It belongs to the universal ribosomal protein uL1 family. Part of the 50S ribosomal subunit.

Its function is as follows. Binds directly to 23S rRNA. The L1 stalk is quite mobile in the ribosome, and is involved in E site tRNA release. Protein L1 is also a translational repressor protein, it controls the translation of the L11 operon by binding to its mRNA. The sequence is that of Large ribosomal subunit protein uL1 from Malacoplasma penetrans (strain HF-2) (Mycoplasma penetrans).